A 340-amino-acid polypeptide reads, in one-letter code: Toxin coregulated pilus biosynthesis protein E (340 aa).

3 consecutive transmembrane segments (helical) span residues 108–131 (AISSMITPSVMLIVTMVVIAGYSV), 146–161 (WPGVTQALYNLGFSLY), and 312–333 (NISLITLALSVIWIFGAIFSLV).

It belongs to the GSP F family.

Its subcellular location is the cell inner membrane. Functionally, probably involved in cholera toxin receptor (GM1) interaction in order to bring the cells within close proximity of the ganglioside for efficient toxin delivery. In Vibrio cholerae serotype O1 (strain ATCC 39315 / El Tor Inaba N16961), this protein is Toxin coregulated pilus biosynthesis protein E (tcpE).